Here is a 334-residue protein sequence, read N- to C-terminus: Glycerol-3-phosphate dehydrogenase [NAD(P)+] 2 (334 aa).

NADPH-binding residues include Trp16, Arg36, Arg37, and Lys110. 2 residues coordinate sn-glycerol 3-phosphate: Lys110 and Gly140. Ala144 provides a ligand contact to NADPH. Residues Lys195, Asp248, Ser258, Arg259, and Asn260 each coordinate sn-glycerol 3-phosphate. Residue Lys195 is the Proton acceptor of the active site. Residue Arg259 participates in NADPH binding. The NADPH site is built by Val282 and Glu284.

The protein belongs to the NAD-dependent glycerol-3-phosphate dehydrogenase family.

It localises to the cytoplasm. The enzyme catalyses sn-glycerol 3-phosphate + NAD(+) = dihydroxyacetone phosphate + NADH + H(+). It carries out the reaction sn-glycerol 3-phosphate + NADP(+) = dihydroxyacetone phosphate + NADPH + H(+). The protein operates within membrane lipid metabolism; glycerophospholipid metabolism. Functionally, catalyzes the reduction of the glycolytic intermediate dihydroxyacetone phosphate (DHAP) to sn-glycerol 3-phosphate (G3P), the key precursor for phospholipid synthesis. The chain is Glycerol-3-phosphate dehydrogenase [NAD(P)+] 2 from Mycobacterium bovis (strain ATCC BAA-935 / AF2122/97).